The sequence spans 79 residues: Large ribosomal subunit protein bL31 (79 aa).

It belongs to the bacterial ribosomal protein bL31 family. Type A subfamily. In terms of assembly, part of the 50S ribosomal subunit.

Its function is as follows. Binds the 23S rRNA. This chain is Large ribosomal subunit protein bL31 (rpmE), found in Rickettsia bellii (strain RML369-C).